The following is a 100-amino-acid chain: Proline-rich protein 15-like protein (100 aa).

Residues Tyr29–Asn51 form a disordered region.

The protein belongs to the PRR15 family.

This Mus musculus (Mouse) protein is Proline-rich protein 15-like protein (Prr15l).